The chain runs to 339 residues: Oncoprotein MEQ (339 aa).

Residues 1-80 (MSQEPEPGAM…ARRRRRKQTD (80 aa)) are disordered. Ser-42 carries the phosphoserine; by host CDK2 modification. The basic motif stretch occupies residues 57 to 84 (KQKLERRRKRNRDAARRRRRKQTDYVDK). The region spanning 57 to 120 (KQKLERRRKR…TSLRVQLACH (64 aa)) is the bZIP domain. Basic residues predominate over residues 60–77 (LERRRKRNRDAARRRRRK). Positions 62–78 (RRRKRNRDAARRRRRKQ) match the Nuclear localization signal motif. The interval 85 to 113 (LHEACEELQRANEHLRKEIRDLRTECTSL) is leucine-zipper. The transactivation domain stretch occupies residues 120–339 (HEPVCPMAVP…VWWFPGDGRP (220 aa)). Pro residues predominate over residues 145–160 (PEPPICTPPPPSPDEP). Residues 145–172 (PEPPICTPPPPSPDEPNAPHCSGSQPPI) are disordered.

This sequence belongs to the bZIP family. Jun subfamily. Homodimer. Interacts with host JUN; this interaction allows MEQ to engage in host cell processes by disguising itself as a cellular JUN. Phosphorylated by host CDK2; this phosphorylation greatly reduces the DNA binding activity of MEQ.

It localises to the host nucleus. It is found in the host nucleolus. In terms of biological role, functions as a DNA-binding transcription factor. Promotes transformation, host cell growth, host cell-cycle progression through G1/S phase, and possesses antiapoptotic activity. Forms functional heterodimers with host JUN. These heterodimers bind with high affinity DNA sequences called MEQ-responsive elements MERE I (TGACA/GTCA), while MEQ homodimers bind a second type of sites termed MERE II (ACACA). Both homo and heterodimerization of MEQ are required for oncogenesis. This is Oncoprotein MEQ (MDV005) from Gallid herpesvirus 2 (strain Chicken/Md5/ATCC VR-987) (GaHV-2).